The sequence spans 133 residues: Small ribosomal subunit protein uS11 (133 aa).

Belongs to the universal ribosomal protein uS11 family. Part of the 30S ribosomal subunit. Interacts with proteins S7 and S18. Binds to IF-3.

In terms of biological role, located on the platform of the 30S subunit, it bridges several disparate RNA helices of the 16S rRNA. Forms part of the Shine-Dalgarno cleft in the 70S ribosome. In Cupriavidus metallidurans (strain ATCC 43123 / DSM 2839 / NBRC 102507 / CH34) (Ralstonia metallidurans), this protein is Small ribosomal subunit protein uS11.